The sequence spans 184 residues: Chaperone protein dnaJ 72 (184 aa).

Residues 3–73 (DHYQVLGVTR…LKRASYNAGS (71 aa)) form the J domain. The helical transmembrane segment at 133–150 (FLLNLALAGGLYFAFTAI) threads the bilayer.

This sequence belongs to the DnaJ family. C/III subfamily.

The protein localises to the membrane. In terms of biological role, plays a continuous role in plant development probably in the structural organization of compartments. The polypeptide is Chaperone protein dnaJ 72 (ATJ72) (Arabidopsis thaliana (Mouse-ear cress)).